The primary structure comprises 166 residues: Crossover junction endodeoxyribonuclease RuvC (166 aa).

Residues Asp12, Glu71, and Asp143 contribute to the active site. Asp12, Glu71, and Asp143 together coordinate Mg(2+).

This sequence belongs to the RuvC family. As to quaternary structure, homodimer which binds Holliday junction (HJ) DNA. The HJ becomes 2-fold symmetrical on binding to RuvC with unstacked arms; it has a different conformation from HJ DNA in complex with RuvA. In the full resolvosome a probable DNA-RuvA(4)-RuvB(12)-RuvC(2) complex forms which resolves the HJ. The cofactor is Mg(2+).

It is found in the cytoplasm. It carries out the reaction Endonucleolytic cleavage at a junction such as a reciprocal single-stranded crossover between two homologous DNA duplexes (Holliday junction).. Functionally, the RuvA-RuvB-RuvC complex processes Holliday junction (HJ) DNA during genetic recombination and DNA repair. Endonuclease that resolves HJ intermediates. Cleaves cruciform DNA by making single-stranded nicks across the HJ at symmetrical positions within the homologous arms, yielding a 5'-phosphate and a 3'-hydroxyl group; requires a central core of homology in the junction. The consensus cleavage sequence is 5'-(A/T)TT(C/G)-3'. Cleavage occurs on the 3'-side of the TT dinucleotide at the point of strand exchange. HJ branch migration catalyzed by RuvA-RuvB allows RuvC to scan DNA until it finds its consensus sequence, where it cleaves and resolves the cruciform DNA. This chain is Crossover junction endodeoxyribonuclease RuvC, found in Oleidesulfovibrio alaskensis (strain ATCC BAA-1058 / DSM 17464 / G20) (Desulfovibrio alaskensis).